The sequence spans 286 residues: 4-hydroxy-tetrahydrodipicolinate synthase (286 aa).

Thr42 serves as a coordination point for pyruvate. Catalysis depends on Tyr129, which acts as the Proton donor/acceptor. Lys157 acts as the Schiff-base intermediate with substrate in catalysis. Ile196 serves as a coordination point for pyruvate.

Belongs to the DapA family. Homotetramer; dimer of dimers.

Its subcellular location is the cytoplasm. The enzyme catalyses L-aspartate 4-semialdehyde + pyruvate = (2S,4S)-4-hydroxy-2,3,4,5-tetrahydrodipicolinate + H2O + H(+). It participates in amino-acid biosynthesis; L-lysine biosynthesis via DAP pathway; (S)-tetrahydrodipicolinate from L-aspartate: step 3/4. In terms of biological role, catalyzes the condensation of (S)-aspartate-beta-semialdehyde [(S)-ASA] and pyruvate to 4-hydroxy-tetrahydrodipicolinate (HTPA). The chain is 4-hydroxy-tetrahydrodipicolinate synthase from Chlamydia trachomatis serovar A (strain ATCC VR-571B / DSM 19440 / HAR-13).